We begin with the raw amino-acid sequence, 169 residues long: Podoplanin (169 aa).

The first 22 residues, 1-22 (MWRVPVLLLVLGGAGLRVPAAG), serve as a signal peptide directing secretion. The Extracellular portion of the chain corresponds to 23–138 (ASTVRPDDII…EKDGLATVTL (116 aa)). T25 is a glycosylation site (O-linked (GalNAc...) threonine). A disordered region spans residues 37–69 (DSVVTPGTEDSVVTPGAEDNVVTDGATEEPYES). Residue S38 is glycosylated (O-linked (GalNAc...) serine). O-linked (GalNAc...) threonine glycosylation is found at T41 and T44. O-linked (GalNAc...) serine glycosylation is present at S47. Residues T50, T59, T63, T72, T76, T79, T83, T92, T96, T106, T107, T108, T113, T126, and T127 are each glycosylated (O-linked (GalNAc...) threonine). Residues 139–159 (VGIIVGVLLAIGFIGGIIIVV) traverse the membrane as a helical segment. Residues 140-144 (GIIVG) form a requires for dimerization and lipid rafts association region. Topologically, residues 160–169 (ARKMSGRYSP) are cytoplasmic. The tract at residues 161–162 (RK) is requires for interaction with MSN and EZR.

This sequence belongs to the podoplanin family. As to quaternary structure, homodimer. Interacts with CLEC1B; the interaction is independent of CLEC1B glycosylation and activates CLEC1B; the interaction is dependent of sialic acid on O-glycans. Interacts with CD9; this interaction is homophilic and attenuates platelet aggregation and pulmonary metastasis induced by PDPN. Interacts with LGALS8; the interaction is glycosylation-dependent; may participate in connection of the lymphatic endothelium to the surrounding extracellular matrix. Interacts with HSPA9. Interacts (via extracellular domain) with CD44; this interaction is required for PDPN-mediated directional migration and regulation of lamellipodia extension/stabilization during cell spreading and migration. Interacts (via cytoplasmic domain) with MSN and EZR; activates RHOA and promotes epithelial-mesenchymal transition. Interacts with CCL21; relocalized PDPN to the basolateral membrane. In terms of processing, extensively O-glycosylated. Contains sialic acid residues. O-glycosylation is necessary for platelet aggregation activity. Disialylated at Thr-59; sialic acid is critical for platelet-aggregating activity and for CLEC1B interaction. Post-translationally, the N-terminus is blocked.

It is found in the membrane. It localises to the cell projection. Its subcellular location is the filopodium membrane. The protein localises to the lamellipodium membrane. The protein resides in the microvillus membrane. It is found in the ruffle membrane. It localises to the membrane raft. Its subcellular location is the apical cell membrane. The protein localises to the basolateral cell membrane. The protein resides in the invadopodium. Mediates effects on cell migration and adhesion through its different partners. During development plays a role in blood and lymphatic vessels separation by binding CLEC1B, triggering CLEC1B activation in platelets and leading to platelet activation and/or aggregation. Interaction with CD9, on the contrary, attenuates platelet aggregation and pulmonary metastasis induced by PDPN. Mediates effects on cell migration and adhesion through its different partners. Through MSN or EZR interaction promotes epithelial-mesenchymal transition (EMT) leading to ERZ phosphorylation and triggering RHOA activation leading to cell migration increase and invasiveness. Interaction with CD44 promotes directional cell migration in epithelial and tumor cells. In lymph nodes (LNs), controls fibroblastic reticular cells (FRCs) adhesion to the extracellular matrix (ECM) and contraction of the actomyosin by maintaining ERM proteins (EZR; MSN and RDX) and MYL9 activation through association with unknown transmembrane proteins. Engagement of CLEC1B by PDPN promotes FRCs relaxation by blocking lateral membrane interactions leading to reduction of ERM proteins (EZR; MSN and RDX) and MYL9 activation. Through binding with LGALS8 may participate in connection of the lymphatic endothelium to the surrounding extracellular matrix. In keratinocytes, induces changes in cell morphology showing an elongated shape, numerous membrane protrusions, major reorganization of the actin cytoskeleton, increased motility and decreased cell adhesion. Controls invadopodia stability and maturation leading to efficient degradation of the extracellular matrix (ECM) in tumor cells through modulation of RHOC activity in order to activate ROCK1/ROCK2 and LIMK1/LIMK2 and inactivation of CFL1. Required for normal lung cell proliferation and alveolus formation at birth. Does not function as a water channel or as a regulator of aquaporin-type water channels. Does not have any effect on folic acid or amino acid transport. In Canis lupus familiaris (Dog), this protein is Podoplanin (PDPN).